We begin with the raw amino-acid sequence, 227 residues long: Lipoprotein-releasing system ATP-binding protein LolD (227 aa).

Residues 5-227 (LICQNITKHY…QDGILRESNS (223 aa)) enclose the ABC transporter domain. ATP is bound at residue 41–48 (GSSGSGKS).

The protein belongs to the ABC transporter superfamily. Lipoprotein translocase (TC 3.A.1.125) family. The complex is composed of two ATP-binding proteins (LolD) and two transmembrane proteins (LolC and LolE).

The protein localises to the cell inner membrane. Part of the ABC transporter complex LolCDE involved in the translocation of mature outer membrane-directed lipoproteins, from the inner membrane to the periplasmic chaperone, LolA. Responsible for the formation of the LolA-lipoprotein complex in an ATP-dependent manner. The polypeptide is Lipoprotein-releasing system ATP-binding protein LolD (Histophilus somni (strain 129Pt) (Haemophilus somnus)).